The sequence spans 327 residues: DNA primase large subunit PriL (327 aa).

4 residues coordinate [4Fe-4S] cluster: Cys-218, Cys-290, Cys-299, and Cys-307.

Belongs to the eukaryotic-type primase large subunit family. As to quaternary structure, heterodimer of a small subunit (PriS) and a large subunit (PriL). Requires [4Fe-4S] cluster as cofactor.

Its function is as follows. Regulatory subunit of DNA primase, an RNA polymerase that catalyzes the synthesis of short RNA molecules used as primers for DNA polymerase during DNA replication. Stabilizes and modulates the activity of the small subunit, increasing the rate of DNA synthesis, and conferring RNA synthesis capability. The DNA polymerase activity may enable DNA primase to also catalyze primer extension after primer synthesis. May also play a role in DNA repair. This chain is DNA primase large subunit PriL, found in Thermoplasma volcanium (strain ATCC 51530 / DSM 4299 / JCM 9571 / NBRC 15438 / GSS1).